Consider the following 151-residue polypeptide: Small ribosomal subunit protein bS6 (151 aa).

The disordered stretch occupies residues 97–151 (EAEPSAMMQKRDRDDRKDRDRGDRPRRRDDDFGGGDRGDRGDRGDRPERNFGGEN). A compositionally biased stretch (basic and acidic residues) spans 105 to 151 (QKRDRDDRKDRDRGDRPRRRDDDFGGGDRGDRGDRGDRPERNFGGEN).

Belongs to the bacterial ribosomal protein bS6 family.

Its function is as follows. Binds together with bS18 to 16S ribosomal RNA. In Methylorubrum extorquens (strain CM4 / NCIMB 13688) (Methylobacterium extorquens), this protein is Small ribosomal subunit protein bS6.